Consider the following 363-residue polypeptide: Class I histocompatibility antigen, Gogo-B*0201 alpha chain (363 aa).

The first 24 residues, 1 to 24 (MQVTAPRTLLLLLSAALALTETWA), serve as a signal peptide directing secretion. Positions 25 to 114 (GSHSMRYFHT…LRGYYNQSED (90 aa)) are alpha-1. The Extracellular portion of the chain corresponds to 25–308 (GSHSMRYFHT…EPSSQSTIPI (284 aa)). Asparagine 110 carries an N-linked (GlcNAc...) asparagine glycan. The segment at 115–206 (GSHTIQRMYG…ENGKETLQRA (92 aa)) is alpha-2. 2 disulfides stabilise this stretch: cysteine 125/cysteine 188 and cysteine 227/cysteine 283. Positions 207 to 298 (DPPKTHVTHH…GLPEPLTLRW (92 aa)) are alpha-3. The 89-residue stretch at 209-297 (PKTHVTHHPI…EGLPEPLTLR (89 aa)) folds into the Ig-like C1-type domain. The interval 299–308 (EPSSQSTIPI) is connecting peptide. Residues 309-333 (VGIVAGLAVLVVTVAVVAVVAAVMC) form a helical membrane-spanning segment. Residues 334-363 (RRKSSGGKGGSYSQAASSDSAQGSDVSLTA) are Cytoplasmic-facing. Residues 336 to 363 (KSSGGKGGSYSQAASSDSAQGSDVSLTA) are disordered. Low complexity predominate over residues 344-363 (SYSQAASSDSAQGSDVSLTA).

The protein belongs to the MHC class I family. In terms of assembly, heterodimer of an alpha chain and a beta chain (beta-2-microglobulin).

It is found in the membrane. Its function is as follows. Involved in the presentation of foreign antigens to the immune system. This is Class I histocompatibility antigen, Gogo-B*0201 alpha chain from Gorilla gorilla gorilla (Western lowland gorilla).